The chain runs to 34 residues: Photosystem II reaction center protein M (34 aa).

Residues isoleucine 5–leucine 25 form a helical membrane-spanning segment.

The protein belongs to the PsbM family. As to quaternary structure, PSII is composed of 1 copy each of membrane proteins PsbA, PsbB, PsbC, PsbD, PsbE, PsbF, PsbH, PsbI, PsbJ, PsbK, PsbL, PsbM, PsbT, PsbX, PsbY, PsbZ, Psb30/Ycf12, at least 3 peripheral proteins of the oxygen-evolving complex and a large number of cofactors. It forms dimeric complexes.

It localises to the plastid. Its subcellular location is the chloroplast thylakoid membrane. Its function is as follows. One of the components of the core complex of photosystem II (PSII). PSII is a light-driven water:plastoquinone oxidoreductase that uses light energy to abstract electrons from H(2)O, generating O(2) and a proton gradient subsequently used for ATP formation. It consists of a core antenna complex that captures photons, and an electron transfer chain that converts photonic excitation into a charge separation. This subunit is found at the monomer-monomer interface. The protein is Photosystem II reaction center protein M of Chaetosphaeridium globosum (Charophycean green alga).